A 561-amino-acid chain; its full sequence is Guanine nucleotide-binding protein-like 3 (561 aa).

Residues 28-46 show a composition bias toward basic residues; sequence HNRKLKKAAKKQGISRKAK. 2 disordered regions span residues 28–58 and 76–110; these read HNRK…APFK and KEQN…KKAK. The stretch at 53–98 forms a coiled coil; it reads NSAPFKEEVLREAEQRKQELETLKEQNKIVKQQEKAAKRKKEKDAA. The span at 76 to 88 shows a compositional bias: basic and acidic residues; the sequence is KEQNKIVKQQEKA. In terms of domain architecture, CP-type G spans 133–319; it reads CQELNKVIEA…MIDSPGILAA (187 aa). GTP contacts are provided by residues 181 to 184, 268 to 275, and 312 to 315; these read NKID, GFPNVGKS, and DSPG. Residues 486 to 532 form a disordered region; that stretch reads ATTTDAEEEKMDTTTNTDEPEAESHISSTVEPIQEPTEKRKDKPAKE. Residues 521-532 show a composition bias toward basic and acidic residues; the sequence is PTEKRKDKPAKE.

The protein belongs to the TRAFAC class YlqF/YawG GTPase family.

It is found in the nucleus. The protein localises to the nucleolus. May play a role in regulating cellular proliferation. This is Guanine nucleotide-binding protein-like 3 (gnl3) from Danio rerio (Zebrafish).